The following is a 601-amino-acid chain: Putative ankyrin repeat protein R841 (601 aa).

ANK repeat units follow at residues 17 to 50 (NNITSLMLAVSNYEIHDNYDTVKSLIDCGFDVNA), 54 to 86 (HGKSVLMYAINIDSDKNINVIKLLIDHGADVNH), 91 to 123 (QRSVLIHTCMYMEYGYNNKTISLLIDKGANINY), 165 to 197 (RENILMRIIKKLDNKYSITTIKLLLEHGINIDH), 201 to 234 (YGQTALMYACIYINGLKNIPIIKLLLEYGANINS), 238 to 269 (KGWSPLMSVFKNDIIDIKTIKFLVEKGAEINS), 274 to 310 (NETMLYVFCKKLSTRIYGQACVKIFDFLIKKGISIDN), 314 to 349 (KGYTPLMAFIIKISEYNEYTEKFIKLLLDYGANINS), 361 to 390 (VCCDVVSGSVSHCKIEIINTLIKYGADVNS), 397 to 427 (TILMNLRYSIHSENYITVLEILLRNGANPNI), 432 to 463 (YHKFPLLIDILNRGGELRIIKLMLQYNIDPNI), and 467 to 500 (IGNNALLFVAKHYKKNERFSFLKLLLTYGASYNC).

In Acanthamoeba polyphaga mimivirus (APMV), this protein is Putative ankyrin repeat protein R841.